A 64-amino-acid chain; its full sequence is MAEKKKSKLKITLVKSLIGRPETQRRTVRALGLTRMHQTVEQNDVPQIRGMVNRIRHLVKVEEA.

This sequence belongs to the universal ribosomal protein uL30 family. Part of the 50S ribosomal subunit.

This chain is Large ribosomal subunit protein uL30, found in Desulforudis audaxviator (strain MP104C).